Here is a 300-residue protein sequence, read N- to C-terminus: Transacylase cctO (300 aa).

The helical transmembrane segment at 52–72 (IVYVSLTFFVVSIGLNFILAI) threads the bilayer. Short sequence motifs (HXXHC) lie at residues 185 to 189 (HQLGC) and 225 to 229 (HVDQC). Asn270 is a glycosylation site (N-linked (GlcNAc...) asparagine).

It belongs to the ustYa family.

The protein resides in the membrane. It functions in the pathway mycotoxin biosynthesis. In terms of biological role, transacylase; part of the gene cluster that mediates the biosynthesis of the mycotoxin cyclochlorotine, a hepatotoxic and carcinogenic cyclic chlorinated pentapeptide. Within the pathway, cctO catalyzes the intramolecular O,N-transacylation from isocyclochlorotine to cyclochlorotine. The NRPS cctN initially catalyzes the condensation of L-serine (Ser), Pro, L-2-aminobutyrate (2Abu), Ser, and beta-Phe in this order to produce isocyclotine. After the dichlorination of Pro2 catalyzed by cctP2 to produce isocyclochlorotine, the cctO-mediated transacylation of isocyclochlorotine can furnish cyclochlorotine. The subsequent hydroxylation of cyclochlorotine by cctR yields hydroxycyclochlorotine as the final product. CctP1 probably acts as a phenylalanine aminomutase and provides the uncommon building block beta-Phe. Furthermore, 2Abu can be synthesized from threonine by one of the threonine dehydratases and transaminases localized outside of the cluster. The functions of the remaining proteins encoded by the cluster, cctM and cctT, have not been identified yet. The protein is Transacylase cctO of Talaromyces islandicus (Penicillium islandicum).